The primary structure comprises 371 residues: tRNA-specific 2-thiouridylase MnmA (371 aa).

Residues 13 to 20 (GMSGGVDS) and M39 each bind ATP. The interaction with target base in tRNA stretch occupies residues 99–101 (NPD). Catalysis depends on C104, which acts as the Nucleophile. C104 and C200 form a disulfide bridge. An ATP-binding site is contributed by G128. The interval 150–152 (KDQ) is interaction with tRNA. Catalysis depends on C200, which acts as the Cysteine persulfide intermediate. The segment at 308–309 (RY) is interaction with tRNA.

It belongs to the MnmA/TRMU family.

It is found in the cytoplasm. The catalysed reaction is S-sulfanyl-L-cysteinyl-[protein] + uridine(34) in tRNA + AH2 + ATP = 2-thiouridine(34) in tRNA + L-cysteinyl-[protein] + A + AMP + diphosphate + H(+). Its function is as follows. Catalyzes the 2-thiolation of uridine at the wobble position (U34) of tRNA, leading to the formation of s(2)U34. This Listeria innocua serovar 6a (strain ATCC BAA-680 / CLIP 11262) protein is tRNA-specific 2-thiouridylase MnmA.